The sequence spans 160 residues: Leucokinin (160 aa).

Residues 1–19 (MAKIVLCMVLLAFGRQVYG) form the signal peptide. Positions 20-130 (ASLVPAPISE…RIKSQLQRDE (111 aa)) are excised as a propeptide. At G147 the chain carries Glycine amide. Positions 151–160 (SPEPPILPDY) are excised as a propeptide.

It localises to the secreted. In terms of biological role, acts through intracellular calcium in Malpighian tubule stellate cells to raise chloride conductance. This chain is Leucokinin (Lk), found in Drosophila melanogaster (Fruit fly).